A 513-amino-acid chain; its full sequence is Na(+)/H(+) antiporter NhaB (513 aa).

A run of 12 helical transmembrane segments spans residues 23–43 (LALIIFLIVNPLIFLISPFVA), 52–72 (IFTLAMALKCYPLLPGGLLAI), 97–117 (LLLMFMVAGIYFMKQLLLFIF), 120–140 (LLLSIRSKMLLSLSFCVAAAF), 144–164 (FLDALTVVAVVISVAVGFYGI), 202–222 (LMMHAGVGTALGGVMTMVGEP), 238–258 (FFLRMSPVTVPVLICGLLTCL), 303–323 (AIIGVWLVTALALHLAEVGLI), 348–368 (TESLPFTALLTVFFSVVAVII), 391–411 (LFYIFNGLLSSISDNVFVGTI), 447–467 (ATPNGQAAFLFLLTSALAPLI), and 475–495 (VWMALPYTLVLTLVGLLCVEF).

This sequence belongs to the NhaB Na(+)/H(+) (TC 2.A.34) antiporter family.

Its subcellular location is the cell inner membrane. The enzyme catalyses 2 Na(+)(in) + 3 H(+)(out) = 2 Na(+)(out) + 3 H(+)(in). Na(+)/H(+) antiporter that extrudes sodium in exchange for external protons. This is Na(+)/H(+) antiporter NhaB from Escherichia coli O6:H1 (strain CFT073 / ATCC 700928 / UPEC).